Reading from the N-terminus, the 135-residue chain is uncharacterized protein (135 aa).

The Response regulatory domain occupies 13 to 129 (QVLIAENSRF…KILEKVNAAI (117 aa)). Residue D64 is modified to 4-aspartylphosphate.

This is an uncharacterized protein from Leptospira interrogans serogroup Icterohaemorrhagiae serovar copenhageni (strain Fiocruz L1-130).